A 276-amino-acid chain; its full sequence is MGLKRFKPVTPGRRFMVISDFSDITKTEPEKSLLAPLKKTGGRNHHGRITVRHRGGGHKRRYRIIDFKRYDKAGIPAKVLAIEYDPNRSARIALLLYADGEKRYILAPKGIKVGDTLMSGSDAEIKPGNALPLEKIPVGTLVHNVEFTPGKGGQIARAAGTYCQIMAKEGDYALLRMPSGELRKVHIKCYATVGVVGNEDHKNEVHGKAGRVRWLGRRPHVRGVAMNPVDHPHGGGEGRGKGHHPTSPWGLPTKGYKTRRGKRPSDKFIVRRRNEV.

The interval 223–276 is disordered; that stretch reads GVAMNPVDHPHGGGEGRGKGHHPTSPWGLPTKGYKTRRGKRPSDKFIVRRRNEV. Basic and acidic residues-rich tracts occupy residues 230 to 240 and 263 to 276; these read DHPHGGGEGRG and RPSD…RNEV.

Belongs to the universal ribosomal protein uL2 family. Part of the 50S ribosomal subunit. Forms a bridge to the 30S subunit in the 70S ribosome.

Functionally, one of the primary rRNA binding proteins. Required for association of the 30S and 50S subunits to form the 70S ribosome, for tRNA binding and peptide bond formation. It has been suggested to have peptidyltransferase activity; this is somewhat controversial. Makes several contacts with the 16S rRNA in the 70S ribosome. This chain is Large ribosomal subunit protein uL2, found in Thermotoga neapolitana (strain ATCC 49049 / DSM 4359 / NBRC 107923 / NS-E).